A 316-amino-acid chain; its full sequence is Transaldolase (316 aa).

Lys131 (schiff-base intermediate with substrate) is an active-site residue.

This sequence belongs to the transaldolase family. Type 1 subfamily. Homodimer.

The protein resides in the cytoplasm. The enzyme catalyses D-sedoheptulose 7-phosphate + D-glyceraldehyde 3-phosphate = D-erythrose 4-phosphate + beta-D-fructose 6-phosphate. Its pathway is carbohydrate degradation; pentose phosphate pathway; D-glyceraldehyde 3-phosphate and beta-D-fructose 6-phosphate from D-ribose 5-phosphate and D-xylulose 5-phosphate (non-oxidative stage): step 2/3. Its function is as follows. Transaldolase is important for the balance of metabolites in the pentose-phosphate pathway. In Buchnera aphidicola subsp. Baizongia pistaciae (strain Bp), this protein is Transaldolase.